A 457-amino-acid polypeptide reads, in one-letter code: Peptidyl-prolyl cis-trans isomerase FKBP5 (457 aa).

Residue Met-1 is modified to N-acetylmethionine. The span at 1 to 11 shows a compositional bias: basic and acidic residues; that stretch reads MTTDEGAKSSR. A disordered region spans residues 1–28; sequence MTTDEGAKSSRENPAATVAEQGEDVTSK. Lys-28 carries the post-translational modification N6-acetyllysine. 2 PPIase FKBP-type domains span residues 50 to 138 and 165 to 251; these read GDKV…LNFK and GARV…KSFE. TPR repeat units follow at residues 268–301, 317–350, and 351–384; these read AAIVKEEGTVYFKGGKYVQAVIQYGKIVSWLEME, LAAFLNLAMCYLKLREYAKAVECCDKALGLDSAN, and EKGLYRRGEAQLLMNEFESAKGDFEKVLEVNPQN. The tract at residues 424–457 is disordered; the sequence is EANKAVSKKTSEGVTNEKLTVSHAVEEEKPEGHV. Ser-445 carries the post-translational modification Phosphoserine. Residues 447 to 457 show a composition bias toward basic and acidic residues; that stretch reads AVEEEKPEGHV.

As to quaternary structure, part of a heteromultimeric cytoplasmic complex with HSP90AA1, HSPA1A/HSPA1B and steroid receptors. Upon ligand binding dissociates from the complex and FKBP4 takes its place. Interacts with functionally mature heterooligomeric progesterone receptor complexes along with HSP90 and TEBP. Interacts with NR3C1. Interacts with Akt/AKT1 and PHLPP1; enhancing dephosphorylation and subsequent activation of Akt/AKT1. Interacts with IFI44L; this interaction modulates the kinase activity of IKBKB and IKBKE. Interacts with IKBKB and IKBKE. Acetylation impairs ability to promote interaction between Akt/AKT1 and PHLPP1. Deacetylation by SIRT7 promotes interaction between Akt/AKT1 and PHLPP1, leading to suppress Akt/AKT1 activation. In terms of processing, ubiquitinated, leading to degradation in a proteasome-dependent manner. Deubiquitinated by USP49, leading to stabilization.

The protein resides in the cytoplasm. It is found in the nucleus. It carries out the reaction [protein]-peptidylproline (omega=180) = [protein]-peptidylproline (omega=0). With respect to regulation, inhibited by both FK506 and rapamycin. Its function is as follows. Immunophilin protein with PPIase and co-chaperone activities. Component of unligated steroid receptors heterocomplexes through interaction with heat-shock protein 90 (HSP90). Plays a role in the intracellular trafficking of heterooligomeric forms of steroid hormone receptors maintaining the complex into the cytoplasm when unliganded. Acts as a regulator of Akt/AKT1 activity by promoting the interaction between Akt/AKT1 and PHLPP1, thereby enhancing dephosphorylation and subsequent activation of Akt/AKT1. Interacts with IKBKE and IKBKB which facilitates IKK complex assembly leading to increased IKBKE and IKBKB kinase activity, NF-kappaB activation, and IFN production. The protein is Peptidyl-prolyl cis-trans isomerase FKBP5 (FKBP5) of Saguinus oedipus (Cotton-top tamarin).